A 643-amino-acid chain; its full sequence is Replication protein E1 (643 aa).

The Nuclear localization signal motif lies at 83 to 85; sequence KRK. 3 positions are modified to phosphoserine; by host: S89, S93, and S107. The Nuclear export signal motif lies at 106–115; the sequence is LSPRLGGLTL. Positions 155 to 184 are disordered; sequence AVHGTMGNGGAVGSELGVQENEEGSTTSTP. The tract at residues 180–346 is DNA-binding region; sequence TTSTPTTRVV…QTILEHCFAD (167 aa). The 151-residue stretch at 445-595 folds into the SF3 helicase domain; sequence IDFLAFMSAF…FPLDTNGNPV (151 aa). 471-478 is a binding site for ATP; it reads GPPNTGKS. Residue K552 forms a Glycyl lysine isopeptide (Lys-Gly) (interchain with G-Cter in SUMO) linkage.

The protein belongs to the papillomaviridae E1 protein family. In terms of assembly, can form hexamers. Interacts with E2 protein; this interaction increases E1 DNA binding specificity. Interacts with host DNA polymerase subunit POLA2. Interacts with host single stranded DNA-binding protein RPA1. Interacts with host TOP1; this interaction stimulates the enzymatic activity of TOP1. Phosphorylated. In terms of processing, sumoylated.

It is found in the host nucleus. The enzyme catalyses Couples ATP hydrolysis with the unwinding of duplex DNA by translocating in the 3'-5' direction.. It carries out the reaction ATP + H2O = ADP + phosphate + H(+). In terms of biological role, ATP-dependent DNA 3'-5' helicase required for initiation of viral DNA replication. It forms a complex with the viral E2 protein. The E1-E2 complex binds to the replication origin which contains binding sites for both proteins. During the initial step, a dimer of E1 interacts with a dimer of protein E2 leading to a complex that binds the viral origin of replication with high specificity. Then, a second dimer of E1 displaces the E2 dimer in an ATP-dependent manner to form the E1 tetramer. Following this, two E1 monomers are added to each half of the site, which results in the formation of two E1 trimers on the viral ori. Subsequently, two hexamers will be created. The double hexamer acts as a bi-directional helicase machinery and unwinds the viral DNA and then recruits the host DNA polymerase to start replication. This chain is Replication protein E1, found in Human papillomavirus 42.